We begin with the raw amino-acid sequence, 492 residues long: uncharacterized protein (492 aa).

The protein belongs to the FGGY kinase family.

This is an uncharacterized protein from Archaeoglobus fulgidus (strain ATCC 49558 / DSM 4304 / JCM 9628 / NBRC 100126 / VC-16).